A 125-amino-acid polypeptide reads, in one-letter code: UPF0102 protein Mpop_0474 (125 aa).

The protein belongs to the UPF0102 family.

This chain is UPF0102 protein Mpop_0474, found in Methylorubrum populi (strain ATCC BAA-705 / NCIMB 13946 / BJ001) (Methylobacterium populi).